Here is a 126-residue protein sequence, read N- to C-terminus: Small ribosomal subunit protein uS8 (126 aa).

The protein belongs to the universal ribosomal protein uS8 family. Part of the 30S ribosomal subunit. Contacts proteins S5 and S12.

Functionally, one of the primary rRNA binding proteins, it binds directly to 16S rRNA central domain where it helps coordinate assembly of the platform of the 30S subunit. The sequence is that of Small ribosomal subunit protein uS8 from Desulfovibrio desulfuricans (strain ATCC 27774 / DSM 6949 / MB).